The sequence spans 726 residues: MAAAKWLIASLAFASSGLAFTPEDFISAPRRGEAIPDPKGELAVFHVSKYNFDKKDRPSGWNLLNLKNGDISVLTTDSDVSEITWLGDGTKVVYVNGTDSVKGGVGIWISDAKNFGNAYKAGSVNGAFSGLKLAKSGDKINFVGYGQSTTKGDLYNEAAAKEAVSSARIYDSLFVRHWDTYVGTQFNAVFSGALTKNGDKYSFDGKLKNLVQPVKYAESPYPPFGGSGDYDLSSDGKTVAFMSKAPELPKANLTTSYIFLVPHDGSRVAEPINKRNGPRTPQGIEGASSSPVFSPDGKRIAYLQMATKNYESDRRVIHIAEVGSNKPVQRIASNWDRSPEAVKWSSDGRTLYVTAEDHATGKLFTLPADARDNHKPEVVKHDGSVSSFYFVGSSKSVLISGNSLWSNALFQVATPGRPNRKLFYANEHDPELKGLGPNDIEPLWVDGARTKIHSWIVKPTGFDKNKVYPLAFLIHGGPQGSWGDSWSTRWNPRVWADQGYVVVAPNPTGSTGFGQKLTDDITNDWGGAPYKDLVKIWEHVHNNIKYIDTDNGIAAGASFGGFMVNWIQGQDLGRKFKALVSHDGTFVGSSKIGTDELFFIEHDFNGTFFEARQNYDRWDCSKPELVAKWSTPQLVVHNDFDFRLSVAEGVGLFNVLQEKGVPSRFLNFPDETHWVTKPENSLVWHQQVLGWVNKWSGINKSNPKSIKLSDCPIEVVDHEAHSYFDY.

The first 19 residues, 1–19 (MAAAKWLIASLAFASSGLA), serve as a signal peptide directing secretion. N-linked (GlcNAc...) asparagine glycosylation is found at asparagine 96 and asparagine 252. The segment at 269 to 291 (AEPINKRNGPRTPQGIEGASSSP) is disordered. Serine 558 acts as the Charge relay system in catalysis. An N-linked (GlcNAc...) asparagine glycan is attached at asparagine 605. Catalysis depends on charge relay system residues aspartate 641 and histidine 673. Residue asparagine 699 is glycosylated (N-linked (GlcNAc...) asparagine).

This sequence belongs to the peptidase S9C family.

It is found in the secreted. In terms of biological role, extracellular dipeptidyl-peptidase which removes N-terminal dipeptides sequentially from polypeptides having unsubstituted N-termini. Contributes to pathogenicity. This is Probable dipeptidyl-peptidase 5 (DPP5) from Trichophyton verrucosum (strain HKI 0517).